The chain runs to 1563 residues: Superkiller complex protein 3 (1563 aa).

Position 2 is an N-acetylserine (Ser2). TPR repeat units lie at residues 6–39 (VKTA…EKNN), 40–73 (YNAW…EPEQ), 157–196 (YELW…ADNI), 272–305 (GPGL…SPVC), 307–339 (AGWC…IDNF), 386–419 (PGLL…YPDL), 420–453 (AEAH…DAEV), 455–492 (EYHY…DAHM), 493–527 (GKVF…DDND), 564–597 (KWAW…DPKD), 598–631 (CNCW…NPDS), 632–665 (TYSV…KEDY), 633–665 (YSVF…KEDY), 673–713 (GECH…RADV), 790–824 (VQHL…DSNN), 826–860 (LHWN…EQIN), 861–894 (AAAW…DPSY), 980–1013 (ASAF…LHSA), 1020–1053 (NVAV…ELED), 1055–1084 (IGFA…CKSE), 1325–1358 (KWSF…NPDQ), and 1399–1432 (VPAW…ASQQ).

The protein belongs to the SKI3 family. As to quaternary structure, component of the SKI complex which consists of SKIC2, SKIC3 and SKIC8. Interacts with PAF1.

Its subcellular location is the cytoplasm. The protein resides in the nucleus. Its function is as follows. Component of the SKI complex, a multiprotein complex that assists the RNA-degrading exosome during the mRNA decay and quality-control pathways. The SKI complex catalyzes mRNA extraction from 80S ribosomal complexes in the 3'-5' direction and channels mRNA to the cytosolic exosome for degradation. SKI-mediated extraction of mRNA from stalled ribosomes allow binding of the Pelota-HBS1L complex and subsequent ribosome disassembly by ABCE1 for ribosome recycling. In the nucleus, the SKI complex associates with transcriptionally active genes in a manner dependent on PAF1 complex (PAF1C). The sequence is that of Superkiller complex protein 3 from Mus musculus (Mouse).